The chain runs to 74 residues: Ubiquitin-like protein FUBI (74 aa).

This sequence belongs to the ubiquitin family.

Functionally, confers arsenite resistance. In Cricetulus griseus (Chinese hamster), this protein is Ubiquitin-like protein FUBI (FAU).